The chain runs to 438 residues: Forkhead box protein J1 (438 aa).

The fork-head DNA-binding region spans K123–L217.

It belongs to the FOXJ1 family.

The protein localises to the nucleus. Key transcription factor required for motile ciliogenesis. Activates genes essential for motile cilia formation and function. This Xenopus tropicalis (Western clawed frog) protein is Forkhead box protein J1.